A 112-amino-acid chain; its full sequence is Nitrogenase-stabilizing/protective protein NifW (112 aa).

The protein belongs to the NifW family. Homotrimer; associates with NifD.

In terms of biological role, may protect the nitrogenase Fe-Mo protein from oxidative damage. The sequence is that of Nitrogenase-stabilizing/protective protein NifW from Burkholderia vietnamiensis (strain G4 / LMG 22486) (Burkholderia cepacia (strain R1808)).